We begin with the raw amino-acid sequence, 365 residues long: Class I histocompatibility antigen, Gogo-C*0101/C*0102 alpha chain (365 aa).

A signal peptide spans M1–A24. Positions G25–D114 are alpha-1. Residues G25–I308 are Extracellular-facing. N110 carries N-linked (GlcNAc...) asparagine glycosylation. An alpha-2 region spans residues G115–A206. Disulfide bonds link C125–C188 and C227–C283. An alpha-3 region spans residues D207–W298. Residues P209 to R297 form the Ig-like C1-type domain. The interval E299–I308 is connecting peptide. A helical transmembrane segment spans residues V309–C332. The Cytoplasmic portion of the chain corresponds to R333–A365. Phosphoserine occurs at positions 356 and 359.

The protein belongs to the MHC class I family. As to quaternary structure, heterodimer of an alpha chain and a beta chain (beta-2-microglobulin).

The protein localises to the membrane. Its function is as follows. Involved in the presentation of foreign antigens to the immune system. This Gorilla gorilla gorilla (Western lowland gorilla) protein is Class I histocompatibility antigen, Gogo-C*0101/C*0102 alpha chain.